The following is a 243-amino-acid chain: UPF0502 protein RALTA_B0914 (243 aa).

Residues Met-1–Thr-10 are compositionally biased toward polar residues. Positions Met-1 to Pro-23 are disordered.

It belongs to the UPF0502 family.

This is UPF0502 protein RALTA_B0914 from Cupriavidus taiwanensis (strain DSM 17343 / BCRC 17206 / CCUG 44338 / CIP 107171 / LMG 19424 / R1) (Ralstonia taiwanensis (strain LMG 19424)).